The chain runs to 237 residues: Ribosomal RNA small subunit methyltransferase G (237 aa).

S-adenosyl-L-methionine contacts are provided by residues Gly-72, Leu-77, 123–124 (AE), and Arg-138. A disordered region spans residues 210 to 237 (TALETGTKAAPSRSPRKPGGRKKRGRKR). Residues 223-237 (SPRKPGGRKKRGRKR) are compositionally biased toward basic residues.

This sequence belongs to the methyltransferase superfamily. RNA methyltransferase RsmG family.

It is found in the cytoplasm. In terms of biological role, specifically methylates the N7 position of guanine in position 518 of 16S rRNA. The protein is Ribosomal RNA small subunit methyltransferase G of Thermobifida fusca (strain YX).